A 138-amino-acid chain; its full sequence is Large ribosomal subunit protein uL16 (138 aa).

Positions 1–15 are enriched in basic residues; it reads MLSPRKVKYRKKQRG. A disordered region spans residues 1–21; the sequence is MLSPRKVKYRKKQRGRLSGEA.

The protein belongs to the universal ribosomal protein uL16 family. In terms of assembly, part of the 50S ribosomal subunit.

Functionally, binds 23S rRNA and is also seen to make contacts with the A and possibly P site tRNAs. The sequence is that of Large ribosomal subunit protein uL16 from Borrelia duttonii (strain Ly).